Consider the following 985-residue polypeptide: Translation initiation factor IF-2 (985 aa).

Composition is skewed to basic and acidic residues over residues 49–58 (QYGKKQEKSS), 65–89 (IQREHGRGQGMEDKKEKDQLFRPDN), and 99–113 (VPNRPPDRRYEDKAK). Residues 49–401 (QYGKKQEKSS…QQSAPPPILD (353 aa)) form a disordered region. Positions 125-136 (SKTTTNSENEQT) are enriched in polar residues. Residues 137–162 (APRQGSAQQSGQGRPQANRPQGSQGR) are compositionally biased toward low complexity. 2 stretches are compositionally biased toward gly residues: residues 180–246 (PQGG…GQGR) and 288–324 (PQGGQGRPYGDRPQGGQGRHYGDRPQGGQGRPQGAGR). Basic and acidic residues predominate over residues 349-377 (KAPDKTKGDRRKNYEKDGKWADGQIEKNK). Residues 378-391 (LFKGRNNKNKKRQH) are compositionally biased toward basic residues. The tr-type G domain maps to 485–654 (LRPPVVTIMG…LLVAEVHELK (170 aa)). A G1 region spans residues 494-501 (GHVDHGKT). Residue 494–501 (GHVDHGKT) coordinates GTP. The G2 stretch occupies residues 519-523 (GITQH). Positions 540 to 543 (DTPG) are G3. GTP contacts are provided by residues 540 to 544 (DTPGH) and 594 to 597 (NKMD). The segment at 594–597 (NKMD) is G4. Residues 630–632 (SAK) form a G5 region.

Belongs to the TRAFAC class translation factor GTPase superfamily. Classic translation factor GTPase family. IF-2 subfamily.

The protein localises to the cytoplasm. Its function is as follows. One of the essential components for the initiation of protein synthesis. Protects formylmethionyl-tRNA from spontaneous hydrolysis and promotes its binding to the 30S ribosomal subunits. Also involved in the hydrolysis of GTP during the formation of the 70S ribosomal complex. This chain is Translation initiation factor IF-2, found in Desulforamulus reducens (strain ATCC BAA-1160 / DSM 100696 / MI-1) (Desulfotomaculum reducens).